We begin with the raw amino-acid sequence, 357 residues long: UDP-N-acetylglucosamine 2-epimerase homolog (357 aa).

The protein belongs to the UDP-N-acetylglucosamine 2-epimerase family.

In Methanococcus maripaludis (strain DSM 14266 / JCM 13030 / NBRC 101832 / S2 / LL), this protein is UDP-N-acetylglucosamine 2-epimerase homolog.